A 356-amino-acid polypeptide reads, in one-letter code: Tyrosine recombinase XerS (356 aa).

The Core-binding (CB) domain occupies 16-121 (LMPWFVLEYY…ALSSLYKYLT (106 aa)). In terms of domain architecture, Tyr recombinase spans 169–354 (KFLDYVENEY…VNDEQKNALD (186 aa)). Residues Arg210, Lys234, His306, Arg309, and His332 contribute to the active site. Tyr341 functions as the O-(3'-phospho-DNA)-tyrosine intermediate in the catalytic mechanism.

Belongs to the 'phage' integrase family. XerS subfamily.

Its subcellular location is the cytoplasm. Its activity is regulated as follows. FtsK is required for recombination. Its function is as follows. Site-specific tyrosine recombinase, which acts by catalyzing the cutting and rejoining of the recombining DNA molecules. Essential to convert dimers of the bacterial chromosome into monomers to permit their segregation at cell division. This is Tyrosine recombinase XerS from Streptococcus thermophilus (strain CNRZ 1066).